The primary structure comprises 202 residues: LexA repressor (202 aa).

Residues 28–48 (RAEIAQRLGFRSPNAAEEHLK) constitute a DNA-binding region (H-T-H motif). Residues serine 119 and lysine 156 each act as for autocatalytic cleavage activity in the active site.

This sequence belongs to the peptidase S24 family. As to quaternary structure, homodimer.

It catalyses the reaction Hydrolysis of Ala-|-Gly bond in repressor LexA.. In terms of biological role, represses a number of genes involved in the response to DNA damage (SOS response), including recA and lexA. Binds to the 16 bp palindromic sequence 5'-CTGTATATATATACAG-3'. In the presence of single-stranded DNA, RecA interacts with LexA causing an autocatalytic cleavage which disrupts the DNA-binding part of LexA, leading to derepression of the SOS regulon and eventually DNA repair. The chain is LexA repressor from Edwardsiella ictaluri (strain 93-146).